Consider the following 194-residue polypeptide: Histone H1.0 (194 aa).

Residue methionine 1 is modified to N-acetylmethionine. Low complexity predominate over residues 1-11 (MTENSTSTPAA). Residues 1–29 (MTENSTSTPAAKPKRAKASKKSTDHPKYS) form a disordered region. An N-acetylthreonine; in Histone H1.0, N-terminally processed modification is found at threonine 2. Residues 24–97 (DHPKYSDMIV…GASGSFRLAK (74 aa)) enclose the H15 domain. Citrulline is present on arginine 42. Residues 83 to 194 (QTKGVGASGS…SSAKRTGKKK (112 aa)) form a disordered region. At serine 104 the chain carries ADP-ribosylserine. Positions 105-194 (VAFKKTKKEV…SSAKRTGKKK (90 aa)) are enriched in basic residues.

Belongs to the histone H1/H5 family. ADP-ribosylated on Ser-104 in response to DNA damage.

The protein resides in the nucleus. Its subcellular location is the chromosome. Its function is as follows. Histones H1 are necessary for the condensation of nucleosome chains into higher-order structures. The histones H1.0 are found in cells that are in terminal stages of differentiation or that have low rates of cell division. The sequence is that of Histone H1.0 (H1-0) from Bos taurus (Bovine).